Here is a 248-residue protein sequence, read N- to C-terminus: Anamorsin homolog (248 aa).

Positions 4–129 (FKGLQKSLYI…ETGSSARLSF (126 aa)) are N-terminal SAM-like domain. Positions 130 to 161 (AKKNANAVNVWKISGDDEELIDEEELLDEEDK) are linker. Residues Cys172, Cys181, Cys184, and Cys186 each coordinate [2Fe-2S] cluster. Positions 172–186 (CSTTGKRKACKNCSC) are fe-S binding site A. 4 residues coordinate [4Fe-4S] cluster: Cys209, Cys212, Cys220, and Cys223. 2 consecutive short sequence motifs (cx2C motif) follow at residues 209-212 (CGNC) and 220-223 (CSTC). Residues 209 to 223 (CGNCYLGDAFRCSTC) form a fe-S binding site B region.

Belongs to the anamorsin family. As to quaternary structure, monomer. It depends on [2Fe-2S] cluster as a cofactor. The cofactor is [4Fe-4S] cluster.

Its subcellular location is the cytoplasm. It is found in the mitochondrion intermembrane space. Its function is as follows. Component of the cytosolic iron-sulfur (Fe-S) protein assembly (CIA) machinery. Required for the maturation of extramitochondrial Fe-S proteins. Part of an electron transfer chain functioning in an early step of cytosolic Fe-S biogenesis, facilitating the de novo assembly of a [4Fe-4S] cluster on the cytosolic Fe-S scaffold complex. Electrons are transferred from NADPH via a FAD- and FMN-containing diflavin oxidoreductase. Together with the diflavin oxidoreductase, also required for the assembly of the diferric tyrosyl radical cofactor of ribonucleotide reductase (RNR), probably by providing electrons for reduction during radical cofactor maturation in the catalytic small subunit. This chain is Anamorsin homolog, found in Drosophila simulans (Fruit fly).